Consider the following 1032-residue polypeptide: Toll-like receptor 9 (1032 aa).

Positions 1 to 25 (MGPCRGALHPLSLLVQAAALALALA) are cleaved as a signal peptide. Over 26-815 (QGTLPAFLPC…QDLRLCLDEA (790 aa)) the chain is Extracellular. Cys35 and Cys45 are oxidised to a cystine. Position 47 to 51 (47 to 51 (WLFLK)) interacts with DNA. 26 LRR repeats span residues 62 to 85 (RGNV…DFVH), 87 to 110 (VHLR…HFPC), 122 to 147 (VPTL…SLVS), 150 to 166 (LSRT…LAGL), 167 to 190 (YALR…ALQV), 198 to 221 (LGNL…LPPS), 223 to 242 (EYLL…DLAN), 243 to 268 (LTAL…CREC), 283 to 306 (LSHL…WFHG), 308 to 332 (GNLM…AFYG), 333 to 356 (LARL…HLHL), 363 to 386 (LLSL…TLQS), 390 to 413 (LPML…IFGA), 415 to 440 (PGLR…TGEV), 472 to 496 (CRTL…MFVR), 498 to 521 (ARLQ…QFVP), 522 to 545 (LSNL…SFTE), 547 to 574 (PRLE…SFVA), 576 to 600 (LPAL…LRSA), 602 to 624 (LRAL…LYLR), 629 to 652 (LRSL…NLDN), 654 to 677 (PKSL…SLAL), 678 to 701 (LPKL…SLPN), 703 to 725 (TQLQ…FFAL), 726 to 749 (AVRL…WFGS), and 751 to 774 (AGAL…TFVD). N-linked (GlcNAc...) asparagine glycosylation is present at Asn64. DNA is bound by residues 72-77 (SNRIHH) and 95-109 (KWNC…MHFP). An intrachain disulfide couples Cys98 to Cys110. N-linked (GlcNAc...) asparagine glycosylation occurs at Asn129. Residues Tyr132, Arg152, and 179–181 (YYK) contribute to the DNA site. A disulfide bond links Cys178 and Cys184. The N-linked (GlcNAc...) asparagine glycan is linked to Asn200. Tyr208 is a binding site for DNA. Asn210 and Asn242 each carry an N-linked (GlcNAc...) asparagine glycan. 2 cysteine pairs are disulfide-bonded: Cys255-Cys268 and Cys258-Cys265. Cys258 is lipidated: S-palmitoyl cysteine. Residue Arg262 coordinates DNA. Cys265 carries the S-palmitoyl cysteine lipid modification. N-linked (GlcNAc...) asparagine glycosylation is present at Asn340. Cys472 and Cys502 are disulfide-bonded. Asn476 and Asn515 each carry an N-linked (GlcNAc...) asparagine glycan. N-linked (GlcNAc...) asparagine glycosylation is present at Asn569. 3 N-linked (GlcNAc...) asparagine glycosylation sites follow: Asn671, Asn696, and Asn701. A glycan (N-linked (GlcNAc...) asparagine) is linked at Asn733. 2 disulfides stabilise this stretch: Cys766/Cys792 and Cys768/Cys811. The helical transmembrane segment at 816–836 (LSWVCFSLSLLAVALSLAVPM) threads the bilayer. The Cytoplasmic portion of the chain corresponds to 837 to 1032 (LHQLCGWDLW…QNFCRGPTTA (196 aa)). In terms of domain architecture, TIR spans 868-1013 (LAYDAFVVFD…SFWAQLGTAL (146 aa)).

The protein belongs to the Toll-like receptor family. Monomer and homodimer. Exists as a monomer in the absence of unmethylated cytidine-phosphate-guanosine (CpG) ligand. Proteolytic processing of an insertion loop (Z-loop) is required for homodimerization upon binding to the unmethylated CpG ligand leading to its activation. Interacts with MYD88 via their respective TIR domains. Interacts with BTK. Interacts (via transmembrane domain) with UNC93B1. Interacts with CD300LH; the interaction may promote full activation of TLR9-triggered innate responses. Interacts with CNPY3 and HSP90B1; this interaction is required for proper folding in the endoplasmic reticulum. Interacts with SMPDL3B. Interacts with CD82; this interaction is essential for TLR9-dependent myddosome formation in response to CpG stimulation. In terms of processing, activated by proteolytic cleavage of the flexible loop between repeats LRR14 and LRR15 within the ectodomain. Cleavage requires UNC93B1. Proteolytically processed by first removing the majority of the ectodomain by either asparagine endopeptidase (AEP) or a cathepsin followed by a trimming event that is solely cathepsin mediated and required for optimal receptor signaling. Post-translationally, palmitoylated by ZDHHC3 in the Golgi regulates TLR9 trafficking from the Golgi to endosomes. Depalmitoylation by PPT1 controls the release of TLR9 from UNC93B1 in endosomes.

It localises to the endoplasmic reticulum membrane. Its subcellular location is the endosome. The protein localises to the lysosome. It is found in the cytoplasmic vesicle. The protein resides in the phagosome. Functionally, key component of innate and adaptive immunity. TLRs (Toll-like receptors) control host immune response against pathogens through recognition of molecular patterns specific to microorganisms. TLR9 is a nucleotide-sensing TLR which is activated by unmethylated cytidine-phosphate-guanosine (CpG) dinucleotides. Acts via MYD88 and TRAF6, leading to NF-kappa-B activation, cytokine secretion and the inflammatory response. Upon CpG stimulation, induces B-cell proliferation, activation, survival and antibody production. This chain is Toll-like receptor 9 (TLR9), found in Canis lupus familiaris (Dog).